We begin with the raw amino-acid sequence, 320 residues long: Aspartate carbamoyltransferase catalytic subunit (320 aa).

The carbamoyl phosphate site is built by R57 and T58. K85 contributes to the L-aspartate binding site. Carbamoyl phosphate contacts are provided by R107, H141, and Q144. L-aspartate contacts are provided by R174 and R228. The carbamoyl phosphate site is built by G269 and P270.

This sequence belongs to the aspartate/ornithine carbamoyltransferase superfamily. ATCase family. Heterododecamer (2C3:3R2) of six catalytic PyrB chains organized as two trimers (C3), and six regulatory PyrI chains organized as three dimers (R2).

It catalyses the reaction carbamoyl phosphate + L-aspartate = N-carbamoyl-L-aspartate + phosphate + H(+). The protein operates within pyrimidine metabolism; UMP biosynthesis via de novo pathway; (S)-dihydroorotate from bicarbonate: step 2/3. In terms of biological role, catalyzes the condensation of carbamoyl phosphate and aspartate to form carbamoyl aspartate and inorganic phosphate, the committed step in the de novo pyrimidine nucleotide biosynthesis pathway. The polypeptide is Aspartate carbamoyltransferase catalytic subunit (Mycobacterium marinum (strain ATCC BAA-535 / M)).